We begin with the raw amino-acid sequence, 46 residues long: uncharacterized protein (46 aa).

A helical membrane pass occupies residues methionine 20–isoleucine 42.

It is found in the membrane. This is an uncharacterized protein from Bacillus subtilis (strain 168).